The primary structure comprises 80 residues: uncharacterized protein (80 aa).

The protein belongs to the 2-oxoacid dehydrogenase family.

This is an uncharacterized protein from Mycobacterium tuberculosis (strain CDC 1551 / Oshkosh).